Reading from the N-terminus, the 586-residue chain is Paxillin (586 aa).

Met-1 carries the N-acetylmethionine modification. Residues 3 to 15 carry the LD motif 1 motif; the sequence is DLDALLADLESTT. A disordered region spans residues 13–138; it reads STTSHISKRP…PSPTVMSSSL (126 aa). A Phosphotyrosine; by PTK6 modification is found at Tyr-31. Pro residues predominate over residues 45–54; sequence VPPPVPPPPS. Residues Ser-83 and Ser-85 each carry the phosphoserine modification. Residues 86 to 98 show a composition bias toward low complexity; that stretch reads PIYSSSTKNSSAS. Position 88 is a phosphotyrosine (Tyr-88). Ser-106 is modified (phosphoserine). Tyr-118 is subject to Phosphotyrosine; by PTK6. Phosphoserine is present on residues Ser-119, Ser-126, and Ser-130. Positions 121-137 are enriched in polar residues; it reads PNKQKSAEPSPTVMSSS. Phosphothreonine is present on Thr-132. Ser-137, Ser-140, and Ser-143 each carry phosphoserine. Positions 144-156 match the LD motif 2 motif; sequence ELDRLLLELNAVQ. Residue Tyr-210 is modified to Phosphotyrosine. A disordered region spans residues 220–241; the sequence is GGKAGPLMKEKPKRNGGRGLED. The LD motif 3 signature appears at 245-257; the sequence is SVESLLDELENSV. Ser-259 carries the post-translational modification Phosphoserine. The tract at residues 266-290 is disordered; that stretch reads VNQGEMSSPQRVTSSQQQTRISASS. Phosphoserine; by CDK5 is present on Ser-273. Phosphoserine occurs at positions 279, 287, 290, 301, 317, 327, and 335. Residues 291 to 310 form a required for binding to PARVA and ILK region; the sequence is ATRELDELMASLSDFKFMAQ. The LD motif 4 signature appears at 294-305; that stretch reads ELDELMASLSDF. The segment at 309 to 329 is disordered; the sequence is AQGKTGSSSPPGGLSKPGSQL. A compositionally biased stretch (low complexity) spans 310-329; the sequence is QGKTGSSSPPGGLSKPGSQL. The LD motif 5 motif lies at 328-340; sequence QLDSMLGSLQSDL. LIM zinc-binding domains are found at residues 353-403, 412-462, and 471-521; these read CGAC…CEKD, CYYC…CRKD, and CGGC…CEVH. Ser-528 bears the Phosphoserine mark. The LIM zinc-binding 4 domain maps to 530 to 580; that stretch reads CSGCQKPITGRCITAMAKKFHPEHFVCAFCLKQLNKGTFKEQNDKPYCQSC.

This sequence belongs to the paxillin family. In terms of assembly, interacts in vitro with VCL/vinculin as well as to the SH3 domain of SRC and, when tyrosine phosphorylated, to the SH2 domain of CRK. Interacts with GIT1. Interacts with NUDT16L1/SDOS. Interacts with PTK2/FAK1. Interacts with PTK2B/PYK2. Interacts with ASAP2. Interacts with unphosphorylated ITGA4. Interacts with RNF5. Interacts with PDCD10. Interacts with NEK3, the interaction is prolactin-dependent. Interacts with PTK6. Interacts with TGFB1I1. Interacts with SORBS1. Interacts with PARVB. Interacts (via LD motif 4) with PARVA/PARVIN. Interacts (via LD motif 4) with ILK. Interacts (via cytoplasmic domain) with CEACAM1; the interaction is phosphotyrosyl-dependent. Interacts with LIMA1; this complex stabilizes actin dynamics. Interacts with CD36 (via C-terminus). Interacts with TRIM15. Interacts with PAK4; PAK4 acts as a scaffold to suppport PAXI phosphorylation at Ser-301. In terms of processing, phosphorylated by MAPK1/ERK2. Phosphorylated on tyrosine residues during integrin-mediated cell adhesion, embryonic development, fibroblast transformation and following stimulation of cells by mitogens. Phosphorylation at Ser-273 by CDK5 reduces its interaction with PTK2/FAK1 in matrix-cell focal adhesions (MCFA) during oligodendrocytes (OLs) differentiation. Phosphorylation at Tyr-31 and Tyr-118 by PTK6 promote the activation of RAC1 via CRK/CrKII, thereby promoting migration and invasion. Phosphorylation at Ser-279 by SLK is required for PXN redistribution and cell motility. Phosphorylation at Ser-301 promotes focal adhesion disassembly during cell migration.

It localises to the cytoplasm. It is found in the cytoskeleton. The protein localises to the cell junction. Its subcellular location is the focal adhesion. The protein resides in the cell cortex. Its function is as follows. Cytoskeletal protein involved in actin-membrane attachment at sites of cell adhesion to the extracellular matrix (focal adhesion). Recruits other proteins such as TRIM15 to focal adhesion. The polypeptide is Paxillin (Rattus norvegicus (Rat)).